Reading from the N-terminus, the 356-residue chain is Phenylalanine--tRNA ligase alpha subunit (356 aa).

Residue Glu-260 coordinates Mg(2+).

Belongs to the class-II aminoacyl-tRNA synthetase family. Phe-tRNA synthetase alpha subunit type 1 subfamily. Tetramer of two alpha and two beta subunits. Mg(2+) is required as a cofactor.

The protein localises to the cytoplasm. The catalysed reaction is tRNA(Phe) + L-phenylalanine + ATP = L-phenylalanyl-tRNA(Phe) + AMP + diphosphate + H(+). This is Phenylalanine--tRNA ligase alpha subunit from Gluconobacter oxydans (strain 621H) (Gluconobacter suboxydans).